Consider the following 428-residue polypeptide: Tryptophan synthase beta chain (428 aa).

Position 92 is an N6-(pyridoxal phosphate)lysine (K92).

It belongs to the TrpB family. In terms of assembly, tetramer of two alpha and two beta chains. Pyridoxal 5'-phosphate serves as cofactor.

It catalyses the reaction (1S,2R)-1-C-(indol-3-yl)glycerol 3-phosphate + L-serine = D-glyceraldehyde 3-phosphate + L-tryptophan + H2O. It functions in the pathway amino-acid biosynthesis; L-tryptophan biosynthesis; L-tryptophan from chorismate: step 5/5. In terms of biological role, the beta subunit is responsible for the synthesis of L-tryptophan from indole and L-serine. The protein is Tryptophan synthase beta chain of Leptothrix cholodnii (strain ATCC 51168 / LMG 8142 / SP-6) (Leptothrix discophora (strain SP-6)).